The primary structure comprises 218 residues: Octanoyltransferase (218 aa).

The region spanning Glu34–His209 is the BPL/LPL catalytic domain. Residues Arg73–His80, Ser140–Gly142, and Gly153–Ala155 each bind substrate. Cys171 acts as the Acyl-thioester intermediate in catalysis.

It belongs to the LipB family.

It is found in the cytoplasm. It carries out the reaction octanoyl-[ACP] + L-lysyl-[protein] = N(6)-octanoyl-L-lysyl-[protein] + holo-[ACP] + H(+). It participates in protein modification; protein lipoylation via endogenous pathway; protein N(6)-(lipoyl)lysine from octanoyl-[acyl-carrier-protein]: step 1/2. Catalyzes the transfer of endogenously produced octanoic acid from octanoyl-acyl-carrier-protein onto the lipoyl domains of lipoate-dependent enzymes. Lipoyl-ACP can also act as a substrate although octanoyl-ACP is likely to be the physiological substrate. The sequence is that of Octanoyltransferase from Shewanella loihica (strain ATCC BAA-1088 / PV-4).